Here is a 761-residue protein sequence, read N- to C-terminus: Pleckstrin homology domain-containing family M member 3 (761 aa).

S132 is subject to Phosphoserine. PH domains lie at 211 to 308 (NILK…EVVH) and 361 to 456 (NILK…IAAN). A Phorbol-ester/DAG-type zinc finger spans residues 669–722 (SHVYSCSLCSQKGFICEICNNGEILYPFEDISTSRCESCGAVFHSECKEKSVPC).

In terms of assembly, interacts with AKT1.

The protein resides in the cytoplasm. It localises to the golgi apparatus. It is found in the cell membrane. Involved in skeletal muscle differentiation. May act as a scaffold protein for AKT1 during muscle differentiation. In Homo sapiens (Human), this protein is Pleckstrin homology domain-containing family M member 3.